The primary structure comprises 268 residues: Small ribosomal subunit protein uS3 (268 aa).

One can recognise a KH type-2 domain in the interval 38-106; it reads IRKLLATGME…QVQLNILEVK (69 aa). The disordered stretch occupies residues 218–268; the sequence is VAAPAGDRPRRERPSRPRRSGATGTTATSTEAGRAATATADAPATTEQKEG. Positions 237–268 are enriched in low complexity; it reads SGATGTTATSTEAGRAATATADAPATTEQKEG.

This sequence belongs to the universal ribosomal protein uS3 family. In terms of assembly, part of the 30S ribosomal subunit. Forms a tight complex with proteins S10 and S14.

In terms of biological role, binds the lower part of the 30S subunit head. Binds mRNA in the 70S ribosome, positioning it for translation. This Rhodococcus jostii (strain RHA1) protein is Small ribosomal subunit protein uS3.